A 145-amino-acid chain; its full sequence is uncharacterized protein (145 aa).

It belongs to the methyltransferase superfamily.

Probable methyltransferase. This is an uncharacterized protein from Schizosaccharomyces pombe (strain 972 / ATCC 24843) (Fission yeast).